The following is a 468-amino-acid chain: MLSKKMKICRPSLVLIYLWYLVDCTSFSMNSVTCLRLMQLLLAKYYQIPIDLVGEKLSIVSASSCLLQYLVALVVVPFYSTIIKKLTPWFTVFTTWVGEEYFFFASTLSILYMDDFPTCAYFVIFSISFLLGISGTGPSLNASYKSLCKLYSYENSFIVVLNSIFVVSSCIGPFLGSILLLRVSLLQLYLISWTIHFINFVFHSLLAVFFSSKYTSYAQKEGQPILNATENLEVEYNALNTTPSSFEEQPLLNGLNDSPRNPVSRTNAEGFKALNASFDGSYKFPIPIVLLCFFLYSLLTPFFDIHLQFQLIVMHMSIVQVGFINSVKTFGSLLTCSVCLFLTYVGGFSVHMMKTTMLIGLTATTLIIFILYFATAQTLPCLALFYGITSSIGPSIHGLVAAYVPNDKPHRYWKFTALLEASATFISYPFQSLAFIVCLKYCSFYFFIGPICICLLGSISSYLLLGYH.

The next 12 helical transmembrane spans lie at 13–33 (LVLIYLWYLVDCTSFSMNSVT), 59–79 (IVSASSCLLQYLVALVVVPFY), 92–112 (VFTTWVGEEYFFFASTLSILY), 116–136 (FPTCAYFVIFSISFLLGISGT), 158–178 (IVVLNSIFVVSSCIGPFLGSI), 190–210 (LISWTIHFINFVFHSLLAVFF), 285–305 (PIPIVLLCFFLYSLLTPFFDI), 330–350 (FGSLLTCSVCLFLTYVGGFSV), 356–376 (TMLIGLTATTLIIFILYFATA), 382–402 (LALFYGITSSIGPSIHGLVAA), 417–437 (ALLEASATFISYPFQSLAFIV), and 446–466 (FFIGPICICLLGSISSYLLLG).

The protein resides in the membrane. Has a role in meiosis. In Schizosaccharomyces pombe (strain 972 / ATCC 24843) (Fission yeast), this protein is Meiotically up-regulated gene 111 protein (mug111).